Here is a 356-residue protein sequence, read N- to C-terminus: GDSL esterase/lipase At5g37690 (356 aa).

Positions 1–18 are cleaved as a signal peptide; sequence MMILRLALAIVISTYATA. The active-site Nucleophile is the S34. N116 and N291 each carry an N-linked (GlcNAc...) asparagine glycan. Active-site residues include D322 and H325.

The protein belongs to the 'GDSL' lipolytic enzyme family.

The protein localises to the secreted. This chain is GDSL esterase/lipase At5g37690, found in Arabidopsis thaliana (Mouse-ear cress).